A 1180-amino-acid polypeptide reads, in one-letter code: Tudor domain-containing protein 1 (1180 aa).

Disordered regions lie at residues 1–66 (MSVK…KKNN) and 79–138 (SQED…RPAK). Over residues 27–41 (NFEKNENKLPPHESL) the composition is skewed to basic and acidic residues. 2 stretches are compositionally biased toward polar residues: residues 79–91 (SQED…NPNG) and 110–122 (NSVS…SNSP). Zn(2+) contacts are provided by C170, C173, C181, C184, C190, C194, H202, and C206. Residues 170 to 206 (CHRCGLFGSLRCSQCKQTYYCSTACQRRDWSAHSIVC) form an MYND-type zinc finger. In terms of domain architecture, Tudor 1 spans 312–372 (IPVKGEVCIA…YHLNRNIDLF (61 aa)). The interval 450-469 (SGQDSKKENADQSDPEDVGK) is disordered. Tudor domains follow at residues 541–600 (YPAI…LLEL), 762–821 (KAEI…FLNL), and 990–1048 (RPRI…HLAL).

It belongs to the TDRD1 family. Found in a mRNP complex, at least composed of TDRD1, TDRD6, TDRD7 and DDX4. Interacts with MAEL. Interacts with PIWIL1, PIWIL2 and PIWIL4 (when methylated on arginine residues). Interacts with TDRD12. In terms of tissue distribution, testis and ovary specific. Also expressed in several cancers.

It localises to the cytoplasm. Its function is as follows. Plays a central role during spermatogenesis by participating in the repression transposable elements and preventing their mobilization, which is essential for the germline integrity. Acts via the piRNA metabolic process, which mediates the repression of transposable elements during meiosis by forming complexes composed of piRNAs and Piwi proteins and governs the methylation and subsequent repression of transposons. Required for the localization of Piwi proteins to the meiotic nuage. Involved in the piRNA metabolic process by ensuring the entry of correct transcripts into the normal piRNA pool and limiting the entry of cellular transcripts into the piRNA pathway. May act by allowing the recruitment of piRNA biogenesis or loading factors that ensure the correct entry of transcripts and piRNAs into Piwi proteins. The chain is Tudor domain-containing protein 1 (TDRD1) from Homo sapiens (Human).